A 117-amino-acid polypeptide reads, in one-letter code: MDKKKLLYWVGGGLVLILIWLWFRNRPAAQVASNWEGPPYMTYNQPQAGSVTLPVAGYTSPSPTLPNRNRSCGCNPAVSAAMAQGADLASKLTDSITSQLNDYASSLNDYLASQAGV.

The helical transmembrane segment at 7–24 (LYWVGGGLVLILIWLWFR) threads the bilayer.

It localises to the virion membrane. Protein of the infection vertex complex, which increases the vertex stability. Anchors the vertex structure to the viral membrane. Essential for viral infectivity. This is Protein P16 (XVI) from Enterobacteria phage PRD1 (Bacteriophage PRD1).